Reading from the N-terminus, the 272-residue chain is Shikimate dehydrogenase (NADP(+)) (272 aa).

Residues 14–16 (SKS) and T61 each bind shikimate. The active-site Proton acceptor is K65. E77 contacts NADP(+). Residues N86 and D102 each coordinate shikimate. NADP(+) contacts are provided by residues 126-130 (GAGGA), 149-154 (NRTYSR), and M213. Y215 is a binding site for shikimate. An NADP(+)-binding site is contributed by G237.

This sequence belongs to the shikimate dehydrogenase family. As to quaternary structure, homodimer.

It carries out the reaction shikimate + NADP(+) = 3-dehydroshikimate + NADPH + H(+). The protein operates within metabolic intermediate biosynthesis; chorismate biosynthesis; chorismate from D-erythrose 4-phosphate and phosphoenolpyruvate: step 4/7. Its function is as follows. Involved in the biosynthesis of the chorismate, which leads to the biosynthesis of aromatic amino acids. Catalyzes the reversible NADPH linked reduction of 3-dehydroshikimate (DHSA) to yield shikimate (SA). The protein is Shikimate dehydrogenase (NADP(+)) of Enterobacter sp. (strain 638).